The following is an 874-amino-acid chain: Alanine--tRNA ligase (874 aa).

Positions 562, 566, 665, and 669 each coordinate Zn(2+).

This sequence belongs to the class-II aminoacyl-tRNA synthetase family. It depends on Zn(2+) as a cofactor.

The protein resides in the cytoplasm. It carries out the reaction tRNA(Ala) + L-alanine + ATP = L-alanyl-tRNA(Ala) + AMP + diphosphate. In terms of biological role, catalyzes the attachment of alanine to tRNA(Ala) in a two-step reaction: alanine is first activated by ATP to form Ala-AMP and then transferred to the acceptor end of tRNA(Ala). Also edits incorrectly charged Ser-tRNA(Ala) and Gly-tRNA(Ala) via its editing domain. In Pseudomonas putida (strain ATCC 700007 / DSM 6899 / JCM 31910 / BCRC 17059 / LMG 24140 / F1), this protein is Alanine--tRNA ligase.